The following is a 249-amino-acid chain: Phosphate import ATP-binding protein PstB (249 aa).

The ABC transporter domain occupies 4–244; sequence IQTKDLNLYY…PKDKRTEDYI (241 aa). Residue 36-43 coordinates ATP; it reads GPSGCGKS.

It belongs to the ABC transporter superfamily. Phosphate importer (TC 3.A.1.7) family. The complex is composed of two ATP-binding proteins (PstB), two transmembrane proteins (PstC and PstA) and a solute-binding protein (PstS).

It localises to the cell membrane. The enzyme catalyses phosphate(out) + ATP + H2O = ADP + 2 phosphate(in) + H(+). Its function is as follows. Part of the ABC transporter complex PstSACB involved in phosphate import. Responsible for energy coupling to the transport system. This chain is Phosphate import ATP-binding protein PstB, found in Clostridium acetobutylicum (strain ATCC 824 / DSM 792 / JCM 1419 / IAM 19013 / LMG 5710 / NBRC 13948 / NRRL B-527 / VKM B-1787 / 2291 / W).